Consider the following 270-residue polypeptide: Acyl-[acyl-carrier-protein]--UDP-N-acetylglucosamine O-acyltransferase (270 aa).

Residues 69 to 72 (QDLK), His-121, His-140, and Gln-157 contribute to the substrate site.

It belongs to the transferase hexapeptide repeat family. LpxA subfamily. As to quaternary structure, homotrimer.

It is found in the cytoplasm. The catalysed reaction is a (3R)-hydroxyacyl-[ACP] + UDP-N-acetyl-alpha-D-glucosamine = a UDP-3-O-[(3R)-3-hydroxyacyl]-N-acetyl-alpha-D-glucosamine + holo-[ACP]. It participates in glycolipid biosynthesis; lipid IV(A) biosynthesis; lipid IV(A) from (3R)-3-hydroxytetradecanoyl-[acyl-carrier-protein] and UDP-N-acetyl-alpha-D-glucosamine: step 1/6. Involved in the biosynthesis of lipid A, a phosphorylated glycolipid that anchors the lipopolysaccharide to the outer membrane of the cell. The polypeptide is Acyl-[acyl-carrier-protein]--UDP-N-acetylglucosamine O-acyltransferase (Helicobacter pylori (strain ATCC 700392 / 26695) (Campylobacter pylori)).